The sequence spans 3507 residues: Dynein axonemal heavy chain 14 (3507 aa).

The disordered stretch occupies residues 91–126 (PHLPGTQDPLRRVRDPTPIVASSPGRRRGSWSGGYG). The stretch at 354–381 (DEFCEEQLQQATQALKQLEDIRNKAISE) forms a coiled coil. The GPAGTGKT motif signature appears at 1164–1171 (GPAGTGKT). ATP is bound by residues 1164 to 1171 (GPAGTGKT) and 1427 to 1434 (GPTGGGKT). Asparagine 1818 carries N-linked (GlcNAc...) asparagine glycosylation.

Belongs to the dynein heavy chain family. As to quaternary structure, consists of at least two heavy chains and a number of intermediate and light chains.

The protein localises to the cytoplasm. It localises to the cytoskeleton. The protein resides in the cilium axoneme. In terms of biological role, force generating protein of respiratory cilia. Produces force towards the minus ends of microtubules. Dynein has ATPase activity; the force-producing power stroke is thought to occur on release of ADP. Involved in sperm motility; implicated in sperm flagellar assembly. This is Dynein axonemal heavy chain 14 (DNAH14) from Homo sapiens (Human).